The chain runs to 165 residues: Cytochrome c-type biogenesis protein CcmE (165 aa).

The Cytoplasmic portion of the chain corresponds to 1 to 29; sequence MSATAEDNARGAKPAGNFARTVSQRKRKR. Residues 30-50 traverse the membrane as a helical; Signal-anchor for type II membrane protein segment; it reads LFLIGGALAVLAVAVGLMLMA. The Periplasmic portion of the chain corresponds to 51–165; that stretch reads FSQDIRFFRT…LKEKGVWEGK (115 aa). Heme-binding residues include His143 and Tyr147.

The protein belongs to the CcmE/CycJ family.

It is found in the cell inner membrane. Heme chaperone required for the biogenesis of c-type cytochromes. Transiently binds heme delivered by CcmC and transfers the heme to apo-cytochromes in a process facilitated by CcmF and CcmH. This chain is Cytochrome c-type biogenesis protein CcmE, found in Brucella anthropi (strain ATCC 49188 / DSM 6882 / CCUG 24695 / JCM 21032 / LMG 3331 / NBRC 15819 / NCTC 12168 / Alc 37) (Ochrobactrum anthropi).